A 460-amino-acid chain; its full sequence is tRNA (guanine(10)-N(2))-methyltransferase TRMT11 (460 aa).

Alanine 2 is subject to N-acetylalanine.

This sequence belongs to the class I-like SAM-binding methyltransferase superfamily. TRM11 methyltransferase family. As to quaternary structure, part of the heterodimeric TRMT11-TRM112 methyltransferase complex; this complex forms an active tRNA methyltransferase, where TRMT112 acts as an activator of the catalytic subunit TRMT11.

The protein resides in the cytoplasm. The enzyme catalyses guanosine(10) in tRNA + S-adenosyl-L-methionine = N(2)-methylguanosine(10) in tRNA + S-adenosyl-L-homocysteine + H(+). Catalytic subunit of the TRMT11-TRM112 methyltransferase complex, that specifically mediates the S-adenosyl-L-methionine-dependent N(2)-methylation of guanosine nucleotide at position 10 (m2G10) in tRNAs. This is one of the major tRNA (guanine-N(2))-methyltransferases. In Bos taurus (Bovine), this protein is tRNA (guanine(10)-N(2))-methyltransferase TRMT11.